Here is a 361-residue protein sequence, read N- to C-terminus: Phosphoserine aminotransferase (361 aa).

L-glutamate is bound at residue Arg43. Pyridoxal 5'-phosphate is bound by residues 77–78 (AS), Trp103, Thr153, Asp173, and Gln196. Residue Lys197 is modified to N6-(pyridoxal phosphate)lysine. Residue 238–239 (NT) coordinates pyridoxal 5'-phosphate.

It belongs to the class-V pyridoxal-phosphate-dependent aminotransferase family. SerC subfamily. Homodimer. Requires pyridoxal 5'-phosphate as cofactor.

Its subcellular location is the cytoplasm. It carries out the reaction O-phospho-L-serine + 2-oxoglutarate = 3-phosphooxypyruvate + L-glutamate. It catalyses the reaction 4-(phosphooxy)-L-threonine + 2-oxoglutarate = (R)-3-hydroxy-2-oxo-4-phosphooxybutanoate + L-glutamate. It participates in amino-acid biosynthesis; L-serine biosynthesis; L-serine from 3-phospho-D-glycerate: step 2/3. It functions in the pathway cofactor biosynthesis; pyridoxine 5'-phosphate biosynthesis; pyridoxine 5'-phosphate from D-erythrose 4-phosphate: step 3/5. In terms of biological role, catalyzes the reversible conversion of 3-phosphohydroxypyruvate to phosphoserine and of 3-hydroxy-2-oxo-4-phosphonooxybutanoate to phosphohydroxythreonine. In Azotobacter vinelandii (strain DJ / ATCC BAA-1303), this protein is Phosphoserine aminotransferase.